The chain runs to 551 residues: Probable 4-coumarate--CoA ligase 1 (551 aa).

Positions 205, 206, 207, 208, 209, and 213 each coordinate ATP. Tyr253 contributes to the (E)-4-coumaroyl-AMP binding site. Residue Lys274 participates in CoA binding. The interval Glu276 to Gln346 is SBD1. (E)-4-coumaroyl-AMP is bound by residues Ala323, Gln346, Gly347, and Thr351. Residues Gln346, Gly347, Thr351, Asp430, and Arg445 each contribute to the ATP site. Residues Gly347–Tyr409 form an SBD2 region. (E)-4-coumaroyl-AMP contacts are provided by Lys447 and Lys451. Residues Lys453 and Gly454 each contribute to the CoA site. Lys537 lines the ATP pocket.

Belongs to the ATP-dependent AMP-binding enzyme family. Requires Mg(2+) as cofactor.

It carries out the reaction (E)-4-coumarate + ATP + CoA = (E)-4-coumaroyl-CoA + AMP + diphosphate. It catalyses the reaction (E)-4-coumarate + ATP + H(+) = (E)-4-coumaroyl-AMP + diphosphate. The enzyme catalyses (E)-4-coumaroyl-AMP + CoA = (E)-4-coumaroyl-CoA + AMP + H(+). It functions in the pathway phytoalexin biosynthesis; 3,4',5-trihydroxystilbene biosynthesis; 3,4',5-trihydroxystilbene from trans-4-coumarate: step 1/2. Functionally, carboxylate--CoA ligase that may use 4-coumarate as substrate. Follows a two-step reaction mechanism, wherein the carboxylate substrate first undergoes adenylation by ATP, followed by a thioesterification in the presence of CoA to yield the final CoA thioester. This Dictyostelium discoideum (Social amoeba) protein is Probable 4-coumarate--CoA ligase 1 (4cl1).